We begin with the raw amino-acid sequence, 174 residues long: Cytochrome c oxidase subunit 5A, mitochondrial (174 aa).

Residues 1–29 constitute a mitochondrion transit peptide; sequence MASLTRAVTRLAIAGRQAVRTIATTTPVS.

Belongs to the cytochrome c oxidase subunit 5A family. Component of the cytochrome c oxidase (complex IV, CIV), a multisubunit enzyme composed of a catalytic core of 3 subunits and several supernumerary subunits. The complex exists as a monomer or a dimer and forms supercomplexes (SCs) in the inner mitochondrial membrane with ubiquinol-cytochrome c oxidoreductase (cytochrome b-c1 complex, complex III, CIII).

It is found in the mitochondrion inner membrane. It participates in energy metabolism; oxidative phosphorylation. Its function is as follows. Component of the cytochrome c oxidase, the last enzyme in the mitochondrial electron transport chain which drives oxidative phosphorylation. The respiratory chain contains 3 multisubunit complexes succinate dehydrogenase (complex II, CII), ubiquinol-cytochrome c oxidoreductase (cytochrome b-c1 complex, complex III, CIII) and cytochrome c oxidase (complex IV, CIV), that cooperate to transfer electrons derived from NADH and succinate to molecular oxygen, creating an electrochemical gradient over the inner membrane that drives transmembrane transport and the ATP synthase. Cytochrome c oxidase is the component of the respiratory chain that catalyzes the reduction of oxygen to water. Electrons originating from reduced cytochrome c in the intermembrane space (IMS) are transferred via the dinuclear copper A center (CU(A)) of subunit 2 and heme A of subunit 1 to the active site in subunit 1, a binuclear center (BNC) formed by heme A3 and copper B (CU(B)). The BNC reduces molecular oxygen to 2 water molecules using 4 electrons from cytochrome c in the IMS and 4 protons from the mitochondrial matrix. This is Cytochrome c oxidase subunit 5A, mitochondrial from Caenorhabditis elegans.